Reading from the N-terminus, the 322-residue chain is MDPTIPALGTSQTPINRREETPCYKQTLSLTVLTCIISLVGLTGNAVVLWLLGFRMRRNAVSTYILNLAAVDFLFLSGHIVRSPLRLISIRHPISKIVNPVMTFPYFIGLSMLSAISTERCLSVLWPMWYRCRRPRHLSVVVCVLLWALSLLRSILEWMFCDFLFSGADSVWCETSDFITIAWLIFLCVVLCGSSLVLLVRILCGSRKMPLTRLYVTILLTVLVFLLCGLPFGIQWALFSRIHLDWKVLFCHVHLISVFLSSLNSSANPIIYFFVGSFRQRQNRQNLKLVLQRALQDTPEVDEGGGRLPEETLELSVSRLEQ.

The Extracellular portion of the chain corresponds to 1–31 (MDPTIPALGTSQTPINRREETPCYKQTLSLT). A helical transmembrane segment spans residues 32–52 (VLTCIISLVGLTGNAVVLWLL). Over 53–60 (GFRMRRNA) the chain is Cytoplasmic. Residues 61–81 (VSTYILNLAAVDFLFLSGHIV) traverse the membrane as a helical segment. Topologically, residues 82–96 (RSPLRLISIRHPISK) are extracellular. Residues 97 to 117 (IVNPVMTFPYFIGLSMLSAIS) form a helical membrane-spanning segment. Topologically, residues 118 to 139 (TERCLSVLWPMWYRCRRPRHLS) are cytoplasmic. A helical membrane pass occupies residues 140-160 (VVVCVLLWALSLLRSILEWMF). Over 161 to 177 (CDFLFSGADSVWCETSD) the chain is Extracellular. Residues 178–198 (FITIAWLIFLCVVLCGSSLVL) form a helical membrane-spanning segment. At 199–213 (LVRILCGSRKMPLTR) the chain is on the cytoplasmic side. The helical transmembrane segment at 214–234 (LYVTILLTVLVFLLCGLPFGI) threads the bilayer. Residues 235 to 254 (QWALFSRIHLDWKVLFCHVH) lie on the Extracellular side of the membrane. Residues 255–275 (LISVFLSSLNSSANPIIYFFV) traverse the membrane as a helical segment. Over 276 to 322 (GSFRQRQNRQNLKLVLQRALQDTPEVDEGGGRLPEETLELSVSRLEQ) the chain is Cytoplasmic.

Belongs to the G-protein coupled receptor 1 family. Mas subfamily.

The protein localises to the cell membrane. Orphan receptor. Probably involved in the function of nociceptive neurons. May regulate nociceptor function and/or development, including the sensation or modulation of pain. Potently activated by enkephalins. The chain is Mas-related G-protein coupled receptor member X3 (MRGPRX3) from Macaca mulatta (Rhesus macaque).